Consider the following 333-residue polypeptide: Protoheme IX farnesyltransferase (333 aa).

A run of 7 helical transmembrane segments spans residues 64-84, 110-130, 133-153, 161-181, 189-209, 246-266, and 287-307; these read LICTLGGGALAAAAAGALNCL, TVFLAAVSCTLAASMLLISGV, LAAGLTLLGLCSYVILYTVIL, IVFGGVAGAIPPLVGASAATG, WLFGLVMLWTPAHFWALAILL, IMGVFALPEGGLLYGIMLLPF, and AKSLFRWSILYMFGICLLLLI.

The protein belongs to the UbiA prenyltransferase family. Protoheme IX farnesyltransferase subfamily.

It is found in the cell inner membrane. It catalyses the reaction heme b + (2E,6E)-farnesyl diphosphate + H2O = Fe(II)-heme o + diphosphate. Its pathway is porphyrin-containing compound metabolism; heme O biosynthesis; heme O from protoheme: step 1/1. Functionally, converts heme B (protoheme IX) to heme O by substitution of the vinyl group on carbon 2 of heme B porphyrin ring with a hydroxyethyl farnesyl side group. This Prochlorococcus marinus (strain MIT 9312) protein is Protoheme IX farnesyltransferase.